A 372-amino-acid chain; its full sequence is 4-hydroxy-3-methylbut-2-en-1-yl diphosphate synthase (flavodoxin) (372 aa).

Residues Cys-270, Cys-273, Cys-305, and Glu-312 each coordinate [4Fe-4S] cluster.

It belongs to the IspG family. Requires [4Fe-4S] cluster as cofactor.

It carries out the reaction (2E)-4-hydroxy-3-methylbut-2-enyl diphosphate + oxidized [flavodoxin] + H2O + 2 H(+) = 2-C-methyl-D-erythritol 2,4-cyclic diphosphate + reduced [flavodoxin]. It participates in isoprenoid biosynthesis; isopentenyl diphosphate biosynthesis via DXP pathway; isopentenyl diphosphate from 1-deoxy-D-xylulose 5-phosphate: step 5/6. In terms of biological role, converts 2C-methyl-D-erythritol 2,4-cyclodiphosphate (ME-2,4cPP) into 1-hydroxy-2-methyl-2-(E)-butenyl 4-diphosphate. In Vibrio parahaemolyticus serotype O3:K6 (strain RIMD 2210633), this protein is 4-hydroxy-3-methylbut-2-en-1-yl diphosphate synthase (flavodoxin).